We begin with the raw amino-acid sequence, 84 residues long: U4-theraphotoxin-Hhn1a (84 aa).

An N-terminal signal peptide occupies residues 1–22; the sequence is MKVTLIAILTRAAVLVLHTTAA. Residues 23–47 constitute a propeptide that is removed on maturation; sequence EELEESQLMEVSMPDTELAAVDEER. Disulfide bonds link C51-C65, C55-C76, and C70-C81.

The protein belongs to the neurotoxin 12 (Hwtx-2) family. 02 (Hwtx-2) subfamily. Expressed by the venom gland.

The protein resides in the secreted. Functionally, postsynaptic neurotoxin. This Cyriopagopus hainanus (Chinese bird spider) protein is U4-theraphotoxin-Hhn1a.